Consider the following 87-residue polypeptide: Putative regulatory protein syc0519_c (87 aa).

This sequence belongs to the RemA family.

This chain is Putative regulatory protein syc0519_c, found in Synechococcus sp. (strain ATCC 27144 / PCC 6301 / SAUG 1402/1) (Anacystis nidulans).